The primary structure comprises 167 residues: Methyl-coenzyme M reductase II operon protein D (167 aa).

In terms of assembly, MCR is composed of three subunits: alpha, beta, and gamma. The function of protein D is not known.

This is Methyl-coenzyme M reductase II operon protein D (mrtD) from Methanocaldococcus jannaschii (strain ATCC 43067 / DSM 2661 / JAL-1 / JCM 10045 / NBRC 100440) (Methanococcus jannaschii).